The sequence spans 186 residues: UPF0301 protein APL_0232 (186 aa).

The protein belongs to the UPF0301 (AlgH) family.

This is UPF0301 protein APL_0232 from Actinobacillus pleuropneumoniae serotype 5b (strain L20).